Here is a 272-residue protein sequence, read N- to C-terminus: MADS-box transcription factor 58 (272 aa).

The segment at 1 to 41 is disordered; that stretch reads MHIYKEQEAEPSTGLMMPEPAPVASPGSGGSGGSGSVGAEK. Residues 27–36 are compositionally biased toward gly residues; the sequence is GSGGSGGSGS. An MADS-box domain is found at 43–103; it reads GSRGKIEIKR…GRLYEYSNNS (61 aa). Residues 129 to 219 form the K-box domain; it reads AQHYQQEAAK…KSKVAESERG (91 aa).

Expressed in the lodicule, stamen carpel and ovule primordia.

It is found in the nucleus. Functionally, probable transcription factor involved in the development of floral organs. Acts as a C-class protein in association with MADS3. Involved in the control of lodicule number (whorl 2), stamen specification (whorl 3), floral meristem determinacy and regulation of the carpel morphogenesis (whorl 4). Plays a more predominant role in floral meristem determinacy than MADS3. The chain is MADS-box transcription factor 58 (MADS58) from Oryza sativa subsp. japonica (Rice).